A 118-amino-acid polypeptide reads, in one-letter code: NADH-ubiquinone oxidoreductase chain 3 (118 aa).

The next 2 membrane-spanning stretches (helical) occupy residues 4 to 24 (FAPI…PLGV) and 87 to 107 (IDPF…IGSL).

The protein belongs to the complex I subunit 3 family.

It localises to the mitochondrion membrane. It catalyses the reaction a ubiquinone + NADH + 5 H(+)(in) = a ubiquinol + NAD(+) + 4 H(+)(out). Core subunit of the mitochondrial membrane respiratory chain NADH dehydrogenase (Complex I) that is believed to belong to the minimal assembly required for catalysis. Complex I functions in the transfer of electrons from NADH to the respiratory chain. The immediate electron acceptor for the enzyme is believed to be ubiquinone. This chain is NADH-ubiquinone oxidoreductase chain 3 (ND3), found in Panax ginseng (Korean ginseng).